The sequence spans 695 residues: Frizzled and smoothened-like protein O (695 aa).

The N-terminal stretch at 1 to 23 is a signal peptide; that stretch reads MKKLNYLLIVSFIFILNLLISKS. Topologically, residues 24–233 are extracellular; the sequence is QVLIDVTAKC…KEYKTKFYSE (210 aa). Positions 28-173 constitute an FZ domain; that stretch reads DVTAKCELID…ANEEIQCSGP (146 aa). Cystine bridges form between Cys-33–Cys-96, Cys-42–Cys-89, Cys-80–Cys-125, Cys-114–Cys-170, and Cys-118–Cys-138. N-linked (GlcNAc...) asparagine glycosylation occurs at Asn-47. Asn-137 and Asn-178 each carry an N-linked (GlcNAc...) asparagine glycan. The helical transmembrane segment at 234-254 threads the bilayer; that stretch reads AILFSFSTACSFYLIFTFGVF. Residues 255 to 262 are Cytoplasmic-facing; sequence PNKYTNRN. A helical membrane pass occupies residues 263-283; sequence WIIVYLGITAICLAISYAVQE. Over 284–307 the chain is Extracellular; it reads ARYGGGDWRCTSDPGRYKSSEDGT. The helical transmembrane segment at 308–328 threads the bilayer; that stretch reads CILGGFFFQIGGLGTILFLSL. At 329-343 the chain is on the cytoplasmic side; that stretch reads YSFDMFLTMNMMTNK. The helical transmembrane segment at 344–364 threads the bilayer; it reads YFIQTSVGMWALIIFYALLPI. At 365 to 387 the chain is on the extracellular side; the sequence is KHYESSIASAGCWLSNEDNMFWQ. A helical transmembrane segment spans residues 388–408; it reads YFCFYVPSYVATFFLGVFIIT. Residues 409 to 435 are Cytoplasmic-facing; it reads SIYKVFKMTVMFKSIKDKRILLLNIRS. Residues 436–456 form a helical membrane-spanning segment; sequence IIFLIAIMFCVSFSTMYPLYV. Over 457–500 the chain is Extracellular; it reads TYNGDDFSKSVEVYVTCLYANIPNGNEVCPQIVFPQFSLRYMNA. The helical transmembrane segment at 501–521 threads the bilayer; sequence ITMAIIGIVGLIGLGIDPHIL. At 522-695 the chain is on the cytoplasmic side; that stretch reads QIYRESIRFK…NIERINSDNV (174 aa). The segment covering 545 to 556 has biased composition (polar residues); it reads SPQPLKQGSTTD. The interval 545 to 695 is disordered; sequence SPQPLKQGST…NIERINSDNV (151 aa). Positions 593-608 are enriched in low complexity; it reads NLSASSESSNNLLNQS. The segment covering 609 to 625 has biased composition (polar residues); sequence TPGNLNINESISSIDTS. A compositionally biased stretch (low complexity) spans 626–686; that stretch reads NNNNNNNNNN…NNNNNNNNNN (61 aa). Residues 653–691 adopt a coiled-coil conformation; sequence NNNNNNNNNNNNNNNNNNNNYSNNNNNNNNNNNNIERIN.

Belongs to the G-protein coupled receptor Fz/Smo family.

It is found in the membrane. The sequence is that of Frizzled and smoothened-like protein O (fslO) from Dictyostelium discoideum (Social amoeba).